Here is a 74-residue protein sequence, read N- to C-terminus: Ubiquitin-like protein FUBI (74 aa).

Belongs to the ubiquitin family.

This is Ubiquitin-like protein FUBI (Fau) from Rattus norvegicus (Rat).